Reading from the N-terminus, the 127-residue chain is Glycine cleavage system H protein (127 aa).

The region spanning 24 to 106 (TATIGITDYA…YAEGWMLKLK (83 aa)) is the Lipoyl-binding domain. Lys-65 bears the N6-lipoyllysine mark.

This sequence belongs to the GcvH family. In terms of assembly, the glycine cleavage system is composed of four proteins: P, T, L and H. It depends on (R)-lipoate as a cofactor.

Functionally, the glycine cleavage system catalyzes the degradation of glycine. The H protein shuttles the methylamine group of glycine from the P protein to the T protein. The sequence is that of Glycine cleavage system H protein from Opitutus terrae (strain DSM 11246 / JCM 15787 / PB90-1).